Consider the following 580-residue polypeptide: Multidrug resistance-like ATP-binding protein MdlB (580 aa).

The ABC transmembrane type-1 domain maps to 25–310; it reads LILAFIFLLS…ITIQQSVLQQ (286 aa). 6 consecutive transmembrane segments (helical) span residues 26–46, 61–81, 150–170, 173–193, 247–267, and 268–288; these read ILAF…PILI, LLII…SVFL, IILI…MALV, FILP…TPLL, LDGF…LCNF, and MFLF…YAFI. An ABC transporter domain is found at 341 to 575; that stretch reads INIQNVSFYH…KSCYYKMYKF (235 aa). 375 to 382 provides a ligand contact to ATP; it reads GHTGSGKS.

It belongs to the ABC transporter superfamily. Drug exporter-2 (TC 3.A.1.117) family.

It localises to the cell membrane. The catalysed reaction is ATP + H2O + xenobioticSide 1 = ADP + phosphate + xenobioticSide 2.. This Buchnera aphidicola subsp. Acyrthosiphon pisum (strain APS) (Acyrthosiphon pisum symbiotic bacterium) protein is Multidrug resistance-like ATP-binding protein MdlB (mdlB).